A 388-amino-acid polypeptide reads, in one-letter code: Succinate--CoA ligase [ADP-forming] subunit beta (388 aa).

Residues 9 to 244 enclose the ATP-grasp domain; it reads KEIFRSMGVA…LEEEDPKEIE (236 aa). Residues lysine 46, 53–55, glutamate 99, cysteine 102, and glutamate 107 each bind ATP; that span reads GRG. Mg(2+) contacts are provided by asparagine 199 and aspartate 213. Residues asparagine 264 and 321–323 each bind substrate; that span reads GIM.

It belongs to the succinate/malate CoA ligase beta subunit family. As to quaternary structure, heterotetramer of two alpha and two beta subunits. Mg(2+) serves as cofactor.

The catalysed reaction is succinate + ATP + CoA = succinyl-CoA + ADP + phosphate. The enzyme catalyses GTP + succinate + CoA = succinyl-CoA + GDP + phosphate. It participates in carbohydrate metabolism; tricarboxylic acid cycle; succinate from succinyl-CoA (ligase route): step 1/1. Functionally, succinyl-CoA synthetase functions in the citric acid cycle (TCA), coupling the hydrolysis of succinyl-CoA to the synthesis of either ATP or GTP and thus represents the only step of substrate-level phosphorylation in the TCA. The beta subunit provides nucleotide specificity of the enzyme and binds the substrate succinate, while the binding sites for coenzyme A and phosphate are found in the alpha subunit. The chain is Succinate--CoA ligase [ADP-forming] subunit beta from Staphylococcus haemolyticus (strain JCSC1435).